The chain runs to 1336 residues: Probable ATP-dependent DNA helicase HFM1 (1336 aa).

The Helicase ATP-binding domain maps to 159–347; it reads EHLLYSDRNF…WLSDENSPGV (189 aa). 172-179 lines the ATP pocket; that stretch reads APTGSGKT. The short motif at 280-283 is the DEAH box element; sequence DEVH. One can recognise a Helicase C-terminal domain in the interval 388–589; it reads NIIQTYSDGR…DVKVALEWIR (202 aa). The SEC63 domain occupies 646-961; sequence PTETGKLMAL…GLDIQQSFNI (316 aa). Residues 1016–1031 form a C4-type zinc finger; the sequence is CNHNCKNKDACGHECC.

It belongs to the helicase family. SKI2 subfamily. Zn(2+) is required as a cofactor.

The catalysed reaction is Couples ATP hydrolysis with the unwinding of duplex DNA by translocating in the 3'-5' direction.. It catalyses the reaction ATP + H2O = ADP + phosphate + H(+). Required for crossover formation and complete synapsis of homologous chromosomes during meiosis. This Xenopus tropicalis (Western clawed frog) protein is Probable ATP-dependent DNA helicase HFM1 (hfm1).